We begin with the raw amino-acid sequence, 595 residues long: Metacaspase-1 (595 aa).

Residues His411 and Cys466 contribute to the active site.

This sequence belongs to the peptidase C14B family. Monomer.

With respect to regulation, activated by Ca(2+). In terms of biological role, cysteine protease that cleaves specifically after arginine or lysine residues. This chain is Metacaspase-1, found in Plasmodium berghei (strain Anka).